The following is a 416-amino-acid chain: Proline-serine-threonine phosphatase-interacting protein 1 (416 aa).

Residues 5 to 264 enclose the F-BAR domain; the sequence is LQFKDAFWCR…TLEGCSIDAD (260 aa). Residues 166–212 are a coiled coil; the sequence is HQKQVEKSQNKARQCKDSATEAERVYRQSIAQLEKVRAEWEQEHRTT. Phosphoserine is present on Ser318. The residue at position 345 (Tyr345) is a Phosphotyrosine. The SH3 domain maps to 359–416; sequence SPAQEYRALYDYTAQNPDELDLSAGDILEVILEGEDGWWTVERNGQRGFVPGSYLEKL.

In terms of assembly, homodimer. Homotrimer. Interacts (via coiled-coil domain) with CD2AP, PTPN12 and PTPN18. Interacts (via SH3 domain) with ABL1 and WAS. Interacts (via SH3 and coiled-coil domains) with MEFV (via B-box zinc finger); the interaction allows binding of MEFV to PYCARD and facilitates formation of PYCARD pyroptosomes. Interacts with CD2, DNM2 and FASLG. Dephosphorylated on Tyr-345 by PTPN18, this event negatively regulates the association of PSTPIP1 with SH2 domain-containing proteins as tyrosine kinase. Phosphorylation of Tyr-345 is probably required for subsequent phosphorylation at other tyrosine residues. Phosphorylation is induced by activation of the EGFR and PDGFR in a ABL1 dependent manner. The phosphorylation regulates the interaction with WAS and with MEFV. In terms of tissue distribution, highly expressed in the peripheral blood leukocytes, granulocytes and monocytes, namely in T-cells and natural killer cells, and in spleen. Weakly expressed in the thymus, small intestine, lung and placenta.

It localises to the cytoplasm. The protein resides in the cell membrane. The protein localises to the cell projection. It is found in the uropodium. Its subcellular location is the cytoskeleton. It localises to the perinuclear region. The protein resides in the lamellipodium. The protein localises to the cleavage furrow. Its function is as follows. Involved in regulation of the actin cytoskeleton. May regulate WAS actin-bundling activity. Bridges the interaction between ABL1 and PTPN18 leading to ABL1 dephosphorylation. May play a role as a scaffold protein between PTPN12 and WAS and allow PTPN12 to dephosphorylate WAS. Has the potential to physically couple CD2 and CD2AP to WAS. Acts downstream of CD2 and CD2AP to recruit WAS to the T-cell:APC contact site so as to promote the actin polymerization required for synapse induction during T-cell activation. Down-regulates CD2-stimulated adhesion through the coupling of PTPN12 to CD2. Also has a role in innate immunity and the inflammatory response. Recruited to inflammasomes by MEFV. Induces formation of pyroptosomes, large supramolecular structures composed of oligomerized PYCARD dimers which form prior to inflammatory apoptosis. Binding to MEFV allows MEFV to bind to PYCARD and facilitates pyroptosome formation. Regulates endocytosis and cell migration in neutrophils. The sequence is that of Proline-serine-threonine phosphatase-interacting protein 1 (PSTPIP1) from Homo sapiens (Human).